The primary structure comprises 82 residues: uncharacterized protein (82 aa).

This is an uncharacterized protein from Escherichia coli (strain K12).